Reading from the N-terminus, the 184-residue chain is Photosystem I assembly protein Ycf4 (184 aa).

2 consecutive transmembrane segments (helical) span residues 22 to 42 and 57 to 77; these read LCWAIILFLGSLGFLLVGTSS and ILFFPQGIVMSFYGIAGLFIS.

This sequence belongs to the Ycf4 family.

It localises to the plastid. Its subcellular location is the chloroplast thylakoid membrane. In terms of biological role, seems to be required for the assembly of the photosystem I complex. The sequence is that of Photosystem I assembly protein Ycf4 from Daucus carota (Wild carrot).